Here is a 324-residue protein sequence, read N- to C-terminus: Sex-lethal homolog (324 aa).

RRM domains are found at residues 102 to 180 (TNLI…YARP) and 188 to 268 (TNLY…LAEE).

As to expression, expressed in somatic cells of both sexes throughout development, but not in the pole cells which are the progenitors of the germline.

It is found in the nucleus. Its function is as follows. Unknown; apparently not involved in somatic sex determination. The sequence is that of Sex-lethal homolog (SXL) from Musca domestica (House fly).